The sequence spans 156 residues: Arginine repressor (156 aa).

Belongs to the ArgR family.

The protein localises to the cytoplasm. It participates in amino-acid biosynthesis; L-arginine biosynthesis [regulation]. Regulates arginine biosynthesis genes. The chain is Arginine repressor from Sodalis glossinidius (strain morsitans).